The chain runs to 54 residues: Preprotein translocase subunit SecG (54 aa).

Residues 1 to 30 are Cytoplasmic-facing; sequence MSKNKQDAGLSTSAGLVRYMDEDASKIKIA. A helical membrane pass occupies residues 31 to 52; the sequence is PEKVLGITISIMVLLFILNYGL. At 53–54 the chain is on the extracellular side; it reads LA.

Belongs to the SEC61-beta family. In terms of assembly, component of the protein translocase complex. Heterotrimer consisting of alpha (SecY), beta (SecG) and gamma (SecE) subunits. Can form oligomers of the heterotrimer.

The protein resides in the cell membrane. Involved in protein export. The function of the beta subunit is unknown, but it may be involved in stabilization of the trimeric complex. The chain is Preprotein translocase subunit SecG from Methanococcus aeolicus (strain ATCC BAA-1280 / DSM 17508 / OCM 812 / Nankai-3).